A 189-amino-acid chain; its full sequence is Auxin-responsive protein IAA3 (189 aa).

The EAR-like (transcriptional repression) motif lies at 12-16 (LRLGL). The interval 42–65 (TDTEKEIESSSRKTETSPPRKAQI) is disordered. The segment covering 43-56 (DTEKEIESSSRKTE) has biased composition (basic and acidic residues). The PB1 domain occupies 92–179 (GIYVKVSMDG…TCKRLRIMKG (88 aa)).

This sequence belongs to the Aux/IAA family. As to quaternary structure, homodimers and heterodimers. Interacts with TPL. Interacts with TIR1, the F-box component of the Skp1-Cdc53/cullin-F-box (SCFTIR1) E3 ubiquitin ligase complex. Phosphorylated by phytochrome A in vitro. In terms of tissue distribution, highly expressed in stems and flowers. Expressed in hypocotyls, cotyledons and leaves, but barely detected in roots. Expressed in root tips. In the root meristem, specifically detected at the vascular tissue transition zone.

The protein resides in the nucleus. Aux/IAA proteins are short-lived transcriptional factors that function as repressors of early auxin response genes at low auxin concentrations. Repression is thought to result from the interaction with auxin response factors (ARFs), proteins that bind to the auxin-responsive promoter element (AuxRE). Plays a central role in auxin regulation of root growth, in gravitropism, and in lateral root formation. Regulated by an auxin-induced protein turnover. Formation of heterodimers with ARF proteins may alter their ability to modulate early auxin response genes expression. When activated by cytokinin, restricts the expression of the PIN genes to the vascular transition zone. Induction of SHY2 in the vascular transition zone restricts BRX expression to down-regulate PIN3 and thus limit meristem growth, but proper SHY2 expression requires BRX. Involved in meristem growth and in determining its size. May participate in strigolactone signaling to regulate meristem size and lateral root formation. This chain is Auxin-responsive protein IAA3 (IAA3), found in Arabidopsis thaliana (Mouse-ear cress).